Consider the following 198-residue polypeptide: Small ribosomal subunit protein uS4z (198 aa).

Phosphoserine is present on Ser-68. The S4 RNA-binding domain occupies 109-180 (RRLQTIVFKS…PGRVKRRNEK (72 aa)). The tract at residues 163-198 (TSPFGGGRPGRVKRRNEKSASKKASGGGDADGDDEE) is disordered.

Belongs to the universal ribosomal protein uS4 family. As to quaternary structure, binds to the translation initiation factors TIF3E1.

This is Small ribosomal subunit protein uS4z (RPS9B) from Arabidopsis thaliana (Mouse-ear cress).